We begin with the raw amino-acid sequence, 127 residues long: Major sperm protein isoform beta (127 aa).

A2 is modified (N-acetylalanine). Positions 9–126 (DINTQPGSKI…RRKNLPIEYN (118 aa)) constitute an MSP domain.

In terms of assembly, forms filaments 10 nm wide, with a characteristic substructure repeating axially at 9 nm. As to expression, sperm.

The protein localises to the cell projection. Its subcellular location is the pseudopodium. The protein resides in the cytoplasm. It is found in the cytoskeleton. Central component in molecular interactions underlying sperm crawling. Forms an extensive filament system that extends from sperm villipoda, along the leading edge of the pseudopod. This chain is Major sperm protein isoform beta, found in Ascaris suum (Pig roundworm).